A 141-amino-acid polypeptide reads, in one-letter code: Large ribosomal subunit protein uL13 (141 aa).

It belongs to the universal ribosomal protein uL13 family. In terms of assembly, part of the 50S ribosomal subunit.

Its function is as follows. This protein is one of the early assembly proteins of the 50S ribosomal subunit, although it is not seen to bind rRNA by itself. It is important during the early stages of 50S assembly. The protein is Large ribosomal subunit protein uL13 of Helicobacter pylori (strain Shi470).